A 505-amino-acid chain; its full sequence is MEEIQRYLQLDRSQQHDFLYPLIFQEYIYALAHDHSLNRSILLENPDYDNQLSFLIVKRLITRMYQQNHFIIFANDSNQNTFLGRNKNLYSQTISEGFSFIVEIPFYIRLIPSQAGKGILKSYNLRSIHSLFPFLENNFSHLNSVLDILIPHSVHLEILVQNLRYWVKDASSLHLLRFLFHEYWNCNPLSATKKRGFDFSPKRSQRLLFFLYNSHVCEYESIFVFLRNQSSHLRSTSFGVFLERIYFYVKMERLVEVFAKDFRASLWLFKDPFMHYVRYQGKSTLVSKGTPLLMNKWKYYLVNFWQCYFDLWVHSGRVYINQLPNHTLNFIGYLSSVRLNPSMVRSQMLENSFLINNAIKKLDTLVPIIPLIGSLAKAKFCNLLGHPISKPAWAGLSDSDIIDRFGQICRNLSHYHSGSSKKKSLYRIKYIIRLSCAKTLARKHKSTVRAFLKRLGSEFLEEFLTLEEEVLSLTFPRASSTFRGEYRSRIWYLDIIYINDLTNSQ.

Belongs to the intron maturase 2 family. MatK subfamily.

Its subcellular location is the plastid. The protein localises to the chloroplast. Functionally, usually encoded in the trnK tRNA gene intron. Probably assists in splicing its own and other chloroplast group II introns. The sequence is that of Maturase K from Cubanola domingensis.